A 368-amino-acid chain; its full sequence is Aminomethyltransferase (368 aa).

The protein belongs to the GcvT family. As to quaternary structure, the glycine cleavage system is composed of four proteins: P, T, L and H.

It catalyses the reaction N(6)-[(R)-S(8)-aminomethyldihydrolipoyl]-L-lysyl-[protein] + (6S)-5,6,7,8-tetrahydrofolate = N(6)-[(R)-dihydrolipoyl]-L-lysyl-[protein] + (6R)-5,10-methylene-5,6,7,8-tetrahydrofolate + NH4(+). The glycine cleavage system catalyzes the degradation of glycine. This chain is Aminomethyltransferase, found in Alkaliphilus oremlandii (strain OhILAs) (Clostridium oremlandii (strain OhILAs)).